Reading from the N-terminus, the 71-residue chain is Putative membrane protein insertion efficiency factor (71 aa).

Belongs to the UPF0161 family.

It is found in the cell inner membrane. Its function is as follows. Could be involved in insertion of integral membrane proteins into the membrane. In Nitrosospira multiformis (strain ATCC 25196 / NCIMB 11849 / C 71), this protein is Putative membrane protein insertion efficiency factor.